The sequence spans 229 residues: Ribonuclease 3 (229 aa).

Residues 5 to 127 form the RNase III domain; the sequence is LSRLERQLGY…LIGAIYLDAG (123 aa). E40 contacts Mg(2+). D44 is a catalytic residue. Residues D113 and E116 each coordinate Mg(2+). E116 is a catalytic residue. The region spanning 154-224 is the DRBM domain; it reads DPKTRLQEFL…AAAALIALGV (71 aa).

The protein belongs to the ribonuclease III family. Homodimer. Mg(2+) is required as a cofactor.

The protein resides in the cytoplasm. It carries out the reaction Endonucleolytic cleavage to 5'-phosphomonoester.. In terms of biological role, digests double-stranded RNA. Involved in the processing of primary rRNA transcript to yield the immediate precursors to the large and small rRNAs (23S and 16S). Processes some mRNAs, and tRNAs when they are encoded in the rRNA operon. Processes pre-crRNA and tracrRNA of type II CRISPR loci if present in the organism. The sequence is that of Ribonuclease 3 from Pseudomonas syringae pv. tomato (strain ATCC BAA-871 / DC3000).